Consider the following 1326-residue polypeptide: Coiled-coil domain-containing protein 171 (1326 aa).

Coiled-coil stretches lie at residues 53-294 (TTKH…RAAH), 323-391 (AEAV…RLQY), 450-561 (SFSV…AFHK), 597-630 (SELC…ICKN), 660-707 (WHRQ…EQLV), 765-792 (FKLE…MKKK), 979-1143 (FTQR…KECV), and 1217-1241 (IMTL…LHTA). A disordered region spans residues 1306 to 1326 (SSHSSPVTMSANANRPTQIGL).

The chain is Coiled-coil domain-containing protein 171 (CCDC171) from Homo sapiens (Human).